The chain runs to 205 residues: MSIKYVASSKLPTPWGVFTMHGFEDSDTGKEHVALTLGTLDANTPILGRIHSECLTGDALFSLRCDCGFQLQTAMQNIAEAGQGFILYLRQEGRGIGLLNKIRAYELQDQGANTVEANERLGFPADMRKYDMILPMMEKIGIKQVKLMTNNPRKVKAMKELGIEVVERIPLQVGKNRYNEGYLKTKSTELGHMMSEYHFTGEEKE.

49-53 (RIHSE) is a GTP binding site. Zn(2+) is bound by residues C54, C65, and C67. Residues Q70, 92 to 94 (EGR), and T114 each bind GTP. D126 acts as the Proton acceptor in catalysis. The Nucleophile role is filled by R128. T149 and K154 together coordinate GTP.

This sequence belongs to the GTP cyclohydrolase II family. Zn(2+) is required as a cofactor.

It carries out the reaction GTP + 4 H2O = 2,5-diamino-6-hydroxy-4-(5-phosphoribosylamino)-pyrimidine + formate + 2 phosphate + 3 H(+). It functions in the pathway cofactor biosynthesis; riboflavin biosynthesis; 5-amino-6-(D-ribitylamino)uracil from GTP: step 1/4. Catalyzes the conversion of GTP to 2,5-diamino-6-ribosylamino-4(3H)-pyrimidinone 5'-phosphate (DARP), formate and pyrophosphate. The sequence is that of GTP cyclohydrolase-2 from Shewanella sediminis (strain HAW-EB3).